Consider the following 368-residue polypeptide: Probable deoxyhypusine synthase (368 aa).

Residues 100–104, 126–128, Glu-132, and Asp-233 contribute to the NAD(+) site; these read SNLVS and TAG. A spermidine-binding site is contributed by 131–132; it reads EE. Asp-238 contributes to the spermidine binding site. Gly-278 is an NAD(+) binding site. His-283 provides a ligand contact to spermidine. 303–304 is an NAD(+) binding site; it reads TA. Residues 309 to 311 and 318 to 324 contribute to the spermidine site; these read GSD and EAISWGK. Residue Lys-324 is the Nucleophile of the active site. Residue 337 to 338 coordinates NAD(+); sequence EA.

Belongs to the deoxyhypusine synthase family. The cofactor is NAD(+).

The enzyme catalyses [eIF5A protein]-L-lysine + spermidine = [eIF5A protein]-deoxyhypusine + propane-1,3-diamine. The protein operates within protein modification; eIF5A hypusination. In terms of biological role, catalyzes the NAD-dependent oxidative cleavage of spermidine and the subsequent transfer of the butylamine moiety of spermidine to the epsilon-amino group of a specific lysine residue of the eIF-5A precursor protein to form the intermediate deoxyhypusine residue. In Drosophila melanogaster (Fruit fly), this protein is Probable deoxyhypusine synthase.